A 34-amino-acid chain; its full sequence is MQVNDLGFIATILFVLVPTVFLLILYIQTNKTAS.

The helical transmembrane segment at 7 to 27 (GFIATILFVLVPTVFLLILYI) threads the bilayer.

The protein belongs to the PsbM family. As to quaternary structure, PSII is composed of 1 copy each of membrane proteins PsbA, PsbB, PsbC, PsbD, PsbE, PsbF, PsbH, PsbI, PsbJ, PsbK, PsbL, PsbM, PsbT, PsbX, PsbY, PsbZ, Psb30/Ycf12, peripheral proteins PsbO, CyanoQ (PsbQ), PsbU, PsbV and a large number of cofactors. It forms dimeric complexes.

The protein localises to the cellular thylakoid membrane. Its function is as follows. One of the components of the core complex of photosystem II (PSII). PSII is a light-driven water:plastoquinone oxidoreductase that uses light energy to abstract electrons from H(2)O, generating O(2) and a proton gradient subsequently used for ATP formation. It consists of a core antenna complex that captures photons, and an electron transfer chain that converts photonic excitation into a charge separation. This subunit is found at the monomer-monomer interface. This is Photosystem II reaction center protein M from Picosynechococcus sp. (strain ATCC 27264 / PCC 7002 / PR-6) (Agmenellum quadruplicatum).